The primary structure comprises 1673 residues: Protein-methionine sulfoxide oxidase mical3b (1673 aa).

The interval 2 to 492 (WDGQSEMCQA…RHLIDTGEGP (491 aa)) is monooxygenase domain. FAD contacts are provided by residues cysteine 96, 96–124 (CGLR…SRNN), glutamate 115, arginine 117, arginine 122, asparagine 124, and aspartate 396. Residues 512–618 (MARYSKLLSW…YLSQLHELLK (107 aa)) form the Calponin-homology (CH) domain. The disordered stretch occupies residues 647–714 (SKLGQSLSRK…PKASEGHSKV (68 aa)). Residues 661-671 (DKKEKEADSVG) are compositionally biased toward basic and acidic residues. Residues 791–853 (DVCYFCGRRV…KHHFSFRLAS (63 aa)) enclose the LIM zinc-binding domain. The segment covering 882-892 (LSSLGSVGTAT) has biased composition (low complexity). Disordered regions lie at residues 882–901 (LSSL…SSTH), 918–938 (RIEL…LQEV), 951–1100 (SLQE…KRSE), 1159–1188 (QSAR…TDGD), and 1357–1393 (GPDA…RETG). Residues 973-992 (LVWKKGEELHARTNGERKLD) show a composition bias toward basic and acidic residues. Acidic residues-rich tracts occupy residues 993-1002 (LEEELKEEEG) and 1010-1041 (EGEE…DPDI). The span at 1081 to 1094 (SDLTPDPSTTPESS) shows a compositional bias: low complexity. Over residues 1159 to 1182 (QSARICDSSTQTHSVTDLQETSPL) the composition is skewed to polar residues. Coiled-coil stretches lie at residues 1475–1531 (EEEL…AVEK) and 1573–1638 (QEKN…VEQR). Residues 1495–1661 (KQEELRRLHR…EKEEDSDLEA (167 aa)) enclose the bMERB domain.

Belongs to the Mical family. The cofactor is FAD.

It localises to the cytoplasm. The protein resides in the cytoskeleton. It is found in the nucleus. It catalyses the reaction L-methionyl-[F-actin] + NADPH + O2 + H(+) = L-methionyl-(R)-S-oxide-[F-actin] + NADP(+) + H2O. Its function is as follows. Monooxygenase that promotes depolymerization of F-actin by mediating oxidation of specific methionine residues on actin. Acts by modifying actin subunits through the addition of oxygen to form methionine-sulfoxide, leading to promote actin filament severing and prevent repolymerization. Involved in exocytic vesicles tethering and fusion: the monooxygenase activity is required for this process. The sequence is that of Protein-methionine sulfoxide oxidase mical3b (mical3b) from Danio rerio (Zebrafish).